Here is a 335-residue protein sequence, read N- to C-terminus: Tetraacyldisaccharide 4'-kinase (335 aa).

ATP is bound at residue 58 to 65; it reads TVGGSGKT.

This sequence belongs to the LpxK family.

The catalysed reaction is a lipid A disaccharide + ATP = a lipid IVA + ADP + H(+). It functions in the pathway glycolipid biosynthesis; lipid IV(A) biosynthesis; lipid IV(A) from (3R)-3-hydroxytetradecanoyl-[acyl-carrier-protein] and UDP-N-acetyl-alpha-D-glucosamine: step 6/6. In terms of biological role, transfers the gamma-phosphate of ATP to the 4'-position of a tetraacyldisaccharide 1-phosphate intermediate (termed DS-1-P) to form tetraacyldisaccharide 1,4'-bis-phosphate (lipid IVA). The chain is Tetraacyldisaccharide 4'-kinase from Shewanella oneidensis (strain ATCC 700550 / JCM 31522 / CIP 106686 / LMG 19005 / NCIMB 14063 / MR-1).